A 312-amino-acid polypeptide reads, in one-letter code: Malate dehydrogenase (312 aa).

NAD(+) is bound by residues glycine 7 to glycine 13 and aspartate 34. Positions 81 and 87 each coordinate substrate. Residues asparagine 94 and isoleucine 117–asparagine 119 contribute to the NAD(+) site. The substrate site is built by asparagine 119 and arginine 153. Catalysis depends on histidine 177, which acts as the Proton acceptor. Methionine 227 contributes to the NAD(+) binding site.

This sequence belongs to the LDH/MDH superfamily. MDH type 1 family. Homodimer.

The catalysed reaction is (S)-malate + NAD(+) = oxaloacetate + NADH + H(+). Functionally, catalyzes the reversible oxidation of malate to oxaloacetate. The sequence is that of Malate dehydrogenase from Shigella flexneri serotype 5b (strain 8401).